Reading from the N-terminus, the 313-residue chain is Pyrimidine-specific ribonucleoside hydrolase RihB (313 aa).

Residue aspartate 11 is the Proton acceptor of the active site. Positions 11, 16, and 124 each coordinate Ca(2+). Positions 227 and 239 each coordinate substrate. Aspartate 240 contributes to the Ca(2+) binding site.

Belongs to the IUNH family. RihB subfamily. Homotetramer. Ca(2+) is required as a cofactor.

It catalyses the reaction a pyrimidine ribonucleoside + H2O = a pyrimidine nucleobase + D-ribose. Hydrolyzes cytidine or uridine to ribose and cytosine or uracil, respectively. Has a clear preference for cytidine over uridine. Strictly specific for ribonucleosides. In Escherichia coli (strain SE11), this protein is Pyrimidine-specific ribonucleoside hydrolase RihB.